Here is a 3084-residue protein sequence, read N- to C-terminus: Protein prune homolog 2 (3084 aa).

M1 is subject to N-acetylmethionine. A DHH motif motif is present at residues 109–111 (GSH). 18 disordered regions span residues 394 to 417 (QPSS…QADG), 430 to 465 (TIRS…PGFD), 500 to 536 (ASEQ…PKGL), 672 to 733 (EQES…QKEE), 811 to 837 (KNTW…MGQS), 861 to 907 (EIWG…KATG), 947 to 1080 (SASN…DDPS), 1224 to 1316 (NMPS…GQSE), 1338 to 1395 (SGVN…LEVE), 1502 to 1543 (MNST…DLHD), 1600 to 1652 (GFGK…TTKR), 1776 to 1799 (ETGT…DPDK), 1836 to 1886 (GELE…GDKS), 1961 to 1980 (DENG…QENQ), 2071 to 2196 (ILTH…NPEV), 2410 to 2782 (MLLS…SHPR), 2797 to 2816 (QSEG…EIDI), and 2825 to 2859 (DEAD…AEEE). Residues 501–511 (SEQSQPSSHSA) show a composition bias toward polar residues. Basic and acidic residues-rich tracts occupy residues 682 to 696 (PWKD…RRTS) and 723 to 733 (GNKEAQDQKEE). 2 stretches are compositionally biased toward polar residues: residues 811–828 (KNTW…SGQE) and 865–891 (KNNS…NNSK). Over residues 962–975 (TNYSTSDSYTSPTY) the composition is skewed to low complexity. Positions 977 to 999 (GDEKEIANKPVDKDNGFEAKDAE) are enriched in basic and acidic residues. The segment covering 1009–1019 (ATSSQQSQRNR) has biased composition (polar residues). The segment covering 1034–1063 (HTEDKPEGNDAHHPDSDALKTEHAEDKNAS) has biased composition (basic and acidic residues). Residues 1071-1080 (SSPSSYDDPS) show a composition bias toward low complexity. Residues 1248–1261 (SPRHSNGKDSHMLE) are compositionally biased toward basic and acidic residues. Residues 1265-1294 (LSESGGLTSQPVNQDTWGDSQGDTASSVTG) show a composition bias toward polar residues. The segment covering 1350-1366 (KPRDQEFSSSDAFEHQD) has biased composition (basic and acidic residues). Residues 1368-1378 (SSASGKISSLS) are compositionally biased toward low complexity. Composition is skewed to polar residues over residues 1779-1792 (TMDT…STEA), 1854-1869 (PIQN…STNP), and 1965-1980 (CVST…QENQ). Basic and acidic residues predominate over residues 2089 to 2103 (VCHDSEGEQKMEKHT). Residues 2162 to 2174 (SSKPASSRSSPEP) show a composition bias toward low complexity. Composition is skewed to basic and acidic residues over residues 2416–2428 (PDHR…ETNI), 2506–2525 (KQTE…EDHQ), and 2535–2553 (SHEK…RENI). Over residues 2569–2584 (PETQLSGTPDTCQSEF) the composition is skewed to polar residues. The span at 2595 to 2606 (RMSSSSNHESAS) shows a compositional bias: low complexity. A compositionally biased stretch (polar residues) spans 2607 to 2617 (LENPAQDQSWM). Residues 2653-2664 (KGPKSQVLERNK) are compositionally biased toward basic and acidic residues. Over residues 2806-2816 (DNLDSPDEIDI) the composition is skewed to acidic residues. The segment covering 2840-2849 (ANKSSGQESE) has biased composition (polar residues). A CRAL-TRIO domain is found at 2879–3040 (DMKVIEPYRR…SIIKYDEEKS (162 aa)).

This sequence belongs to the PPase class C family. Prune subfamily.

It localises to the cytoplasm. May play an important role in regulating differentiation, survival and aggressiveness of the tumor cells. This chain is Protein prune homolog 2 (Prune2), found in Mus musculus (Mouse).